The primary structure comprises 180 residues: Symerythrin (180 aa).

Residues 17–127 (FQDAVSHNNT…RRALETALEV (111 aa)) constitute a cross-link (3-(L-phenylalan-2'-yl)-L-valine (Phe-Val)). A Ferritin-like diiron domain is found at 21 to 180 (VSHNNTDANA…RALENLLEVA (160 aa)). Glutamate 37, glutamate 40, glutamate 71, glutamate 128, glutamate 131, glutamate 162, and histidine 165 together coordinate Fe(3+).

In terms of assembly, monomer. Fe(3+) serves as cofactor.

It localises to the plastid. Its subcellular location is the cyanelle. In terms of biological role, exhibits oxidase-like and peroxidase-like activities in vitro. In Cyanophora paradoxa, this protein is Symerythrin.